Consider the following 120-residue polypeptide: Small ribosomal subunit protein uS13 (120 aa).

Positions 96–120 (PCRGQRTRTNARTRKGPRKAIAGKK) are disordered.

Belongs to the universal ribosomal protein uS13 family. As to quaternary structure, part of the 30S ribosomal subunit. Forms a loose heterodimer with protein S19. Forms two bridges to the 50S subunit in the 70S ribosome.

In terms of biological role, located at the top of the head of the 30S subunit, it contacts several helices of the 16S rRNA. In the 70S ribosome it contacts the 23S rRNA (bridge B1a) and protein L5 of the 50S subunit (bridge B1b), connecting the 2 subunits; these bridges are implicated in subunit movement. Contacts the tRNAs in the A and P-sites. The chain is Small ribosomal subunit protein uS13 from Chromobacterium violaceum (strain ATCC 12472 / DSM 30191 / JCM 1249 / CCUG 213 / NBRC 12614 / NCIMB 9131 / NCTC 9757 / MK).